We begin with the raw amino-acid sequence, 215 residues long: Large ribosomal subunit protein bL25 (215 aa).

A disordered region spans residues 174–215; sequence ETVVTVQPPATEKEEETEAAVTDSEPEVINEKEEPAEEAKEE. The segment covering 186–215 has biased composition (acidic residues); the sequence is KEEETEAAVTDSEPEVINEKEEPAEEAKEE.

This sequence belongs to the bacterial ribosomal protein bL25 family. CTC subfamily. In terms of assembly, part of the 50S ribosomal subunit; part of the 5S rRNA/L5/L18/L25 subcomplex. Contacts the 5S rRNA. Binds to the 5S rRNA independently of L5 and L18.

Functionally, this is one of the proteins that binds to the 5S RNA in the ribosome where it forms part of the central protuberance. The sequence is that of Large ribosomal subunit protein bL25 from Halalkalibacterium halodurans (strain ATCC BAA-125 / DSM 18197 / FERM 7344 / JCM 9153 / C-125) (Bacillus halodurans).